We begin with the raw amino-acid sequence, 834 residues long: Mannosyl-oligosaccharide glucosidase (834 aa).

The segment covering 1–10 (MARGERRRRA) has biased composition (basic residues). A disordered region spans residues 1-37 (MARGERRRRAAAAEGARPLERARAAGRRDGRAGGARG). Residues 1–43 (MARGERRRRAAAAEGARPLERARAAGRRDGRAGGARGSASGAA) are Cytoplasmic-facing. An Endoplasmic reticulum targeting motif is present at residues 3-9 (RGERRRR). A compositionally biased stretch (basic and acidic residues) spans 17 to 31 (RPLERARAAGRRDGR). Residues 44 to 64 (LAVVVLALAFGLSGRWVLAWL) traverse the membrane as a helical; Signal-anchor for type II membrane protein segment. At 65 to 834 (RVRRALTLHP…LVLLIMAEEY (770 aa)) the chain is on the lumenal side. The required for endoplasmic reticulum targeting stretch occupies residues 74-136 (PAPSALPPDS…GTPPKLRHTC (63 aa)). The active-site Proton donor is Asp580. Asn654 is a glycosylation site (N-linked (GlcNAc...) asparagine). Catalysis depends on Glu804, which acts as the Proton acceptor.

Belongs to the glycosyl hydrolase 63 family.

The protein resides in the endoplasmic reticulum membrane. The enzyme catalyses N(4)-(alpha-D-Glc-(1-&gt;2)-alpha-D-Glc-(1-&gt;3)-alpha-D-Glc-(1-&gt;3)-alpha-D-Man-(1-&gt;2)-alpha-D-Man-(1-&gt;2)-alpha-D-Man-(1-&gt;3)-[alpha-D-Man-(1-&gt;2)-alpha-D-Man-(1-&gt;3)-[alpha-D-Man-(1-&gt;2)-alpha-D-Man-(1-&gt;6)]-alpha-D-Man-(1-&gt;6)]-beta-D-Man-(1-&gt;4)-beta-D-GlcNAc-(1-&gt;4)-beta-D-GlcNAc)-L-asparaginyl-[protein] + H2O = N(4)-(alpha-D-Glc-(1-&gt;3)-alpha-D-Glc-(1-&gt;3)-alpha-D-Man-(1-&gt;2)-alpha-D-Man-(1-&gt;2)-alpha-D-Man-(1-&gt;3)-[alpha-D-Man-(1-&gt;2)-alpha-D-Man-(1-&gt;3)-[alpha-D-Man-(1-&gt;2)-alpha-D-Man-(1-&gt;6)]-alpha-D-Man-(1-&gt;6)]-beta-D-Man-(1-&gt;4)-beta-D-GlcNAc-(1-&gt;4)-beta-D-GlcNAc)-L-asparaginyl-[protein] + beta-D-glucose. It participates in glycan metabolism; N-glycan degradation. With respect to regulation, inhibited by the deoxynojirimycin derivative N-9'-Methoxynonyl-1-Deoxynojirimycin. In terms of biological role, in the context of N-glycan degradation, cleaves the distal alpha 1,2-linked glucose residue from the Glc(3)Man(9)GlcNAc(2) oligosaccharide precursor in a highly specific manner. Functionally, (Microbial infection) Required for successful influenza or dengue virus infection; inhibition of its activity by a deoxynojirimycin derivative prevents death in mice infected with lethal doses of influenza or dengue viruses, even when administrated after infection. This Mus musculus (Mouse) protein is Mannosyl-oligosaccharide glucosidase.